The primary structure comprises 83 residues: uncharacterized protein (83 aa).

3 helical membrane passes run 4 to 24 (AILS…GVLM), 32 to 52 (IGNI…LKAF), and 54 to 74 (YYDL…IIIG).

The protein resides in the cell membrane. This is an uncharacterized protein from Methanocaldococcus jannaschii (strain ATCC 43067 / DSM 2661 / JAL-1 / JCM 10045 / NBRC 100440) (Methanococcus jannaschii).